Consider the following 352-residue polypeptide: Mitochondrial ubiquitin ligase activator of NFKB 1 (352 aa).

The Cytoplasmic portion of the chain corresponds to 1–8 (MESGSRPS). Residues 9–29 (LGQVILLGTSSMVTAVLYSIY) form a helical membrane-spanning segment. The Mitochondrial intermembrane segment spans residues 30–238 (RQKAQVAQEL…LLHRQESSVR (209 aa)). K52 is covalently cross-linked (Glycyl lysine isopeptide (Lys-Gly) (interchain with G-Cter in ubiquitin)). Residues 239–259 (LWKILVLVFGFATCATLFFIL) traverse the membrane as a helical segment. Residues 260 to 352 (RKQYLHRQER…ITRVIPLYNS (93 aa)) are Cytoplasmic-facing. K299 participates in a covalent cross-link: Glycyl lysine isopeptide (Lys-Gly) (interchain with G-Cter in ubiquitin). The RING-type zinc-finger motif lies at 302 to 340 (CVVCLSNFKSCVFLECGHVCSCRQCYLALPEPKRCPICR).

In terms of assembly, homooligomer. Interacts with MAP3K7/TAK1. Interacts with UBC9. Interacts with and sumoylates DNM1L. Interacts with MAVS. Interacts with TP53 (via N-terminus); the interaction leads to ubiquitination and proteasomal degradation of TP53. Ubiquitinated by PRKN during mitophagy, leading to its degradation and enhancement of mitophagy. Deubiquitinated by USP30. As to expression, expressed in cortical neurons (at protein level).

The protein resides in the mitochondrion outer membrane. It is found in the peroxisome. It catalyses the reaction S-ubiquitinyl-[E2 ubiquitin-conjugating enzyme]-L-cysteine + [acceptor protein]-L-lysine = [E2 ubiquitin-conjugating enzyme]-L-cysteine + N(6)-ubiquitinyl-[acceptor protein]-L-lysine.. The protein operates within protein modification; protein ubiquitination. It functions in the pathway protein modification; protein sumoylation. Its function is as follows. Exhibits weak E3 ubiquitin-protein ligase activity. E3 ubiquitin ligases accept ubiquitin from an E2 ubiquitin-conjugating enzyme in the form of a thioester and then directly transfer the ubiquitin to targeted substrates. Can ubiquitinate AKT1 preferentially at 'Lys-284' involving 'Lys-48'-linked polyubiquitination and seems to be involved in regulation of Akt signaling by targeting phosphorylated Akt to proteasomal degradation. Mediates polyubiquitination of cytoplasmic TP53 at 'Lys-27' which targets TP53 for proteasomal degradation, thus reducing TP53 levels in the cytoplasm and mitochondrion. Proposed to preferentially act as a SUMO E3 ligase at physiological concentrations. Plays a role in the control of mitochondrial morphology by promoting mitochondrial fragmentation, and influences mitochondrial localization. Likely to promote mitochondrial fission through negatively regulating the mitochondrial fusion proteins MFN1 and MFN2, acting in a pathway that is parallel to the PRKN/PINK1 regulatory pathway. May also be involved in the sumoylation of the membrane fission protein DNM1L. Inhibits cell growth. When overexpressed, activates JNK through MAP3K7/TAK1 and induces caspase-dependent apoptosis. Involved in the modulation of innate immune defense against viruses by inhibiting RIGI-dependent antiviral response. Can mediate RIGI sumoylation and disrupt its polyubiquitination. The polypeptide is Mitochondrial ubiquitin ligase activator of NFKB 1 (Mul1) (Mus musculus (Mouse)).